Consider the following 449-residue polypeptide: Ribulose bisphosphate carboxylase large chain (449 aa).

Positions 1–2 are excised as a propeptide; the sequence is MS. An N-acetylproline modification is found at Pro-3. Lys-14 bears the N6,N6,N6-trimethyllysine mark. Residues Asn-123 and Thr-173 each contribute to the substrate site. The active-site Proton acceptor is the Lys-175. Lys-177 lines the substrate pocket. Residues Lys-201, Asp-203, and Glu-204 each contribute to the Mg(2+) site. Lys-201 carries the N6-carboxylysine modification. The active-site Proton acceptor is the His-294. Xaa-295, His-327, and Ser-379 together coordinate substrate.

It belongs to the RuBisCO large chain family. Type I subfamily. Heterohexadecamer of 8 large chains and 8 small chains; disulfide-linked. The disulfide link is formed within the large subunit homodimers. It depends on Mg(2+) as a cofactor. Post-translationally, the disulfide bond which can form in the large chain dimeric partners within the hexadecamer appears to be associated with oxidative stress and protein turnover.

It localises to the plastid. Its subcellular location is the chloroplast. The catalysed reaction is 2 (2R)-3-phosphoglycerate + 2 H(+) = D-ribulose 1,5-bisphosphate + CO2 + H2O. The enzyme catalyses D-ribulose 1,5-bisphosphate + O2 = 2-phosphoglycolate + (2R)-3-phosphoglycerate + 2 H(+). RuBisCO catalyzes two reactions: the carboxylation of D-ribulose 1,5-bisphosphate, the primary event in carbon dioxide fixation, as well as the oxidative fragmentation of the pentose substrate in the photorespiration process. Both reactions occur simultaneously and in competition at the same active site. This is Ribulose bisphosphate carboxylase large chain from Salacia pallescens.